Reading from the N-terminus, the 862-residue chain is Valine--tRNA ligase (862 aa).

Residues 47 to 57 carry the 'HIGH' region motif; sequence PTASGSLHIGH. A disordered region spans residues 110–130; the sequence is EPGLTPPFEGGDNKSSKAADQ. The segment covering 120-129 has biased composition (basic and acidic residues); that stretch reads GDNKSSKAAD. The short motif at 584–588 is the 'KMSKS' region element; the sequence is KMSKS. An ATP-binding site is contributed by K587.

Belongs to the class-I aminoacyl-tRNA synthetase family. ValS type 2 subfamily. In terms of assembly, monomer.

The protein localises to the cytoplasm. It catalyses the reaction tRNA(Val) + L-valine + ATP = L-valyl-tRNA(Val) + AMP + diphosphate. Its function is as follows. Catalyzes the attachment of valine to tRNA(Val). As ValRS can inadvertently accommodate and process structurally similar amino acids such as threonine, to avoid such errors, it has a 'posttransfer' editing activity that hydrolyzes mischarged Thr-tRNA(Val) in a tRNA-dependent manner. The sequence is that of Valine--tRNA ligase from Leifsonia xyli subsp. xyli (strain CTCB07).